We begin with the raw amino-acid sequence, 630 residues long: Membrane protein insertase YidC (630 aa).

The next 5 helical transmembrane spans lie at 10–30, 396–416, 470–490, 528–548, and 571–591; these read LMFL…VMGP, MVGN…LILF, VPML…TVTI, LIGA…LYGF, and FFPI…VIYW.

It belongs to the OXA1/ALB3/YidC family. Type 1 subfamily. Interacts with the Sec translocase complex via SecD. Specifically interacts with transmembrane segments of nascent integral membrane proteins during membrane integration.

It is found in the cell inner membrane. In terms of biological role, required for the insertion and/or proper folding and/or complex formation of integral membrane proteins into the membrane. Involved in integration of membrane proteins that insert both dependently and independently of the Sec translocase complex, as well as at least some lipoproteins. Aids folding of multispanning membrane proteins. This is Membrane protein insertase YidC from Caulobacter sp. (strain K31).